The sequence spans 103 residues: Large ribosomal subunit protein bL21 (103 aa).

It belongs to the bacterial ribosomal protein bL21 family. Part of the 50S ribosomal subunit. Contacts protein L20.

Its function is as follows. This protein binds to 23S rRNA in the presence of protein L20. The chain is Large ribosomal subunit protein bL21 from Mycolicibacterium paratuberculosis (strain ATCC BAA-968 / K-10) (Mycobacterium paratuberculosis).